We begin with the raw amino-acid sequence, 523 residues long: Occludin (523 aa).

A disordered region spans residues 1-20 (MSVRPFESPPPYRPDEFKPN). Over 1-66 (MSVRPFESPP…KWTSPPGVIR (66 aa)) the chain is Cytoplasmic. The region spanning 60–269 (SPPGVIRILS…IIVFAVKTRR (210 aa)) is the MARVEL domain. The chain crosses the membrane as a helical span at residues 67 to 87 (ILSMLVIVMCIAVFACVASTL). Residues 88–140 (AWDRAYGTGIFGGSMNYPYGSGFGSYGGGFGGYGYGYGYGYGGYTDPRAAKGF) lie on the Extracellular side of the membrane. A helical transmembrane segment spans residues 141–161 (LLAMAAFCFIASLVIFVTSVI). The Cytoplasmic portion of the chain corresponds to 162 to 173 (RSGMSRTRRYYL). The helical transmembrane segment at 174–194 (IVIIVSAILGIMVFIATIVYI) threads the bilayer. Topologically, residues 195–244 (MGVNPTAQASGSMYGSQIYTICSQFYTPGGTGLYVDQYLYHYCVVDPQEA) are extracellular. The cysteines at positions 216 and 237 are disulfide-linked. The chain crosses the membrane as a helical span at residues 245 to 265 (IAIVLGFMIIVAFALIIVFAV). Residues 266–523 (KTRRKMDRYD…MVGDYDRRKT (258 aa)) are Cytoplasmic-facing. Position 302 is a phosphoserine (Ser-302). The disordered stretch occupies residues 302 to 338 (SAGTQDMPPPPSDYAERVDSPMAYSSNGKVNGKRSYP). Thr-305 bears the Phosphothreonine mark. 4 positions are modified to phosphoserine: Ser-313, Ser-321, Ser-340, and Ser-360. A disordered region spans residues 363-408 (DFRQPRYSSNDNLETPSKRTPTKGKAGKAKRTDPDHYETDYTTGGE). Residues 368-381 (RYSSNDNLETPSKR) show a composition bias toward polar residues. Tyr-369 carries the post-translational modification Phosphotyrosine. Phosphoserine occurs at positions 370 and 371. Residues 382 to 391 (TPTKGKAGKA) show a composition bias toward basic residues. Over residues 392 to 401 (KRTDPDHYET) the composition is skewed to basic and acidic residues. A phosphotyrosine mark is found at Tyr-399 and Tyr-403. Phosphothreonine; by PKC/PRKCH occurs at positions 404 and 405. Ser-409 carries the phosphoserine modification. In terms of domain architecture, OCEL spans 415–523 (EDWLREYPPI…MVGDYDRRKT (109 aa)). A coiled-coil region spans residues 433 to 489 (YKRNFDAGLQEYKSLLAELDEVNKELSRLDRELDDYREESEEYMAAADEYNRLKQVK). A Phosphoserine modification is found at Ser-491.

Belongs to the ELL/occludin family. In terms of assembly, interacts with TJP1/ZO1. Interacts with VAPA. Interacts with CLDN1, CLDN6, CLDN9, CLDN11, CLDN12 and CLDN17. Interacts with PLSCR1. Interacts with LSR, ILDR1 and ILDR2. Interacts with TJP2/ZO2. In terms of processing, dephosphorylated by PTPRJ.

The protein resides in the cell membrane. Its subcellular location is the cell junction. It is found in the tight junction. Functionally, may play a role in the formation and regulation of the tight junction (TJ) paracellular permeability barrier. May be involved in the organization of actin in endothelial cells. This chain is Occludin (Ocln), found in Rattus norvegicus (Rat).